The following is a 744-amino-acid chain: Tripartite motif-containing protein 3 (744 aa).

At A2 the chain carries N-acetylalanine. An interaction with KIF21B region spans residues 2–290; that stretch reads AKREDSPGPE…LAAQAFPERP (289 aa). S7 is modified (phosphoserine). Residues 22–63 form an RING-type zinc finger; it reads CSICLDRYRCPKVLPCLHTFCERCLQNYIPPQSLTLSCPVCR. The B box-type zinc finger occupies 110 to 151; it reads GRPLSCPNHEGKTMEFYCEACETAMCGECRAGEHREHGTVLL. C115, H118, C138, and H143 together coordinate Zn(2+). Positions 153-224 form a coiled coil; the sequence is DVVEQHKAAL…RKQALVSDLE (72 aa). The stretch at 317–418 is one Filamin repeat; the sequence is TTSAAAHETV…VRGSPFRVRA (102 aa). Residues 420-462 are disordered; that stretch reads RPGDLPPSPDDVKRRVKSPGGPGSHVRQKAVRRPSSMYSTGGK. Phosphoserine is present on S427. NHL repeat units follow at residues 473–516, 520–563, 564–605, 609–652, 656–699, and 700–743; these read VFRV…FSNE, KFRF…FSPE, GKFK…FQPN, VGRF…YSAD, LFKF…FDSS, and GSFL…YRYL.

The protein belongs to the TRIM/RBCC family. As to quaternary structure, forms homooligomers. Interacts with TRIM2; this interaction reduces TRIM2 activity. Associates with myosin-Vb (MYO5B) and alpha-actinin-4 (ACTN4). Component of the CART complex, at least composed of ACTN4, HGS/HRS, MYO5B and TRIM3. Interacts with ZFYVE28/LST2. Interacts with KIF21B. In terms of tissue distribution, highly expressed in the brain, moderate levels in the lung, very low levels in the liver, kidney and heart. In the brain, expression was highest in the cerebellum. Expression in the brain is found at low levels at embryonic day 15 and then increases during the first two postnatal weeks before decreasing through adulthood.

Its subcellular location is the cytoplasm. It localises to the early endosome. It is found in the golgi apparatus. The protein localises to the trans-Golgi network. The protein resides in the cell projection. Its subcellular location is the dendrite. The enzyme catalyses S-ubiquitinyl-[E2 ubiquitin-conjugating enzyme]-L-cysteine + [acceptor protein]-L-lysine = [E2 ubiquitin-conjugating enzyme]-L-cysteine + N(6)-ubiquitinyl-[acceptor protein]-L-lysine.. Functionally, E3 ubiquitin ligase that plays essential roles in neuronal functions such as regulation of neuronal plasticity, learning, and memory. In addition to its neuronal functions, participates in other biological processes such as innate immunity or cell cycle regulation. Component of the cytoskeleton-associated recycling or transport complex in neurons, polyubiquitinates gamma-actin, thus regulating neuronal plasticity, learning, and memory. Ubiquitinates postsynaptic scaffold GKAP, a neuronal substrate involved in synaptic remodeling and thereby modulates dendritic spine morphology. Positively regulates motility of microtubule-dependent motor protein KIF21B. Induces growth arrest via its RING-dependent E3 ligase activity and ubiquinates CDKN1A. Positively regulates TLR3-mediated signaling by mediating 'Lys-63'-linked polyubiquitination of TLR3. In turn, promotes the recognition and sorting of polyubiquitinated TLR3 by the ESCRT complexes. The polypeptide is Tripartite motif-containing protein 3 (Trim3) (Rattus norvegicus (Rat)).